Here is a 112-residue protein sequence, read N- to C-terminus: MKKIDAIIKPFKLDDVREALAEVGITGMTVTEVKGFGRQKGHTELYRGAEYMVDFLPKVKIEIVVPDDIVDTCVDTIIRTAQTGKIGDGKIFVFDVARVIRIRTGEEDDAAI.

An O-UMP-tyrosine modification is found at Tyr51.

It belongs to the P(II) protein family. Homotrimer. Post-translationally, uridylylated/deuridylylated by GlnD.

Its function is as follows. P-II indirectly controls the transcription of the glutamine synthetase gene (GlnA). P-II prevents NR-II-catalyzed conversion of NR-I to NR-I-phosphate, the transcriptional activator of GlnA. When P-II is uridylylated to P-II-UMP, these events are reversed. When the ratio of Gln to 2-ketoglutarate decreases, P-II is uridylylated to P-II-UMP, which causes the deadenylation of glutamine synthetase by GlnE, so activating the enzyme. The polypeptide is Nitrogen regulatory protein P-II 1 (glnB) (Escherichia coli O157:H7).